Reading from the N-terminus, the 353-residue chain is 3-isopropylmalate dehydrogenase (353 aa).

An NAD(+)-binding site is contributed by 73–86 (GPQYDTLDRPLRPE). Substrate is bound by residues Arg93, Arg103, Arg131, and Asp220. Mg(2+) is bound by residues Asp220, Asp244, and Asp248. 278–290 (GSAPDIAGKNLAN) contacts NAD(+).

This sequence belongs to the isocitrate and isopropylmalate dehydrogenases family. LeuB type 1 subfamily. Homodimer. The cofactor is Mg(2+). It depends on Mn(2+) as a cofactor.

It is found in the cytoplasm. The enzyme catalyses (2R,3S)-3-isopropylmalate + NAD(+) = 4-methyl-2-oxopentanoate + CO2 + NADH. It functions in the pathway amino-acid biosynthesis; L-leucine biosynthesis; L-leucine from 3-methyl-2-oxobutanoate: step 3/4. Catalyzes the oxidation of 3-carboxy-2-hydroxy-4-methylpentanoate (3-isopropylmalate) to 3-carboxy-4-methyl-2-oxopentanoate. The product decarboxylates to 4-methyl-2 oxopentanoate. The protein is 3-isopropylmalate dehydrogenase of Thiobacillus denitrificans (strain ATCC 25259 / T1).